A 219-amino-acid chain; its full sequence is Probable glucosamine 6-phosphate N-acetyltransferase (219 aa).

Positions 42–198 (MKVRPLKDTD…EGPTLKRNAT (157 aa)) constitute an N-acetyltransferase domain. Substrate contacts are provided by residues T64, 111-114 (KFIH), and 123-125 (EDV). Residue 133-138 (GKQLGK) coordinates acetyl-CoA. Substrate contacts are provided by residues 154–155 (YK) and R186.

It belongs to the acetyltransferase family. GNA1 subfamily.

The enzyme catalyses D-glucosamine 6-phosphate + acetyl-CoA = N-acetyl-D-glucosamine 6-phosphate + CoA + H(+). Its pathway is nucleotide-sugar biosynthesis; UDP-N-acetyl-alpha-D-glucosamine biosynthesis; N-acetyl-alpha-D-glucosamine 1-phosphate from alpha-D-glucosamine 6-phosphate (route I): step 1/2. This Drosophila melanogaster (Fruit fly) protein is Probable glucosamine 6-phosphate N-acetyltransferase.